Here is a 7031-residue protein sequence, read N- to C-terminus: Extracellular matrix-binding protein EbhB (7031 aa).

Residues 1–39 form the signal peptide; sequence MNYRDKIQKFSIRKYTVGTFSTVIATLVFLGFNTSQAHA. Over residues 41 to 59 the composition is skewed to polar residues; the sequence is ETNQPASVVKQKQQSNNEQ. 5 disordered regions span residues 41 to 86, 99 to 152, 250 to 277, 1342 to 1373, and 2418 to 2438; these read ETNQ…HENE, KVAQ…GNDN, PQRQ…PRSV, NNIT…ATTD, and TITP…TLTA. A compositionally biased stretch (low complexity) spans 65–80; it reads SQVQNSQNSQNGQSLS. Residues 99 to 117 show a composition bias toward polar residues; sequence KVAQSSTTNDEQPASQNVN. The span at 130–140 shows a compositional bias: basic and acidic residues; sequence PDKEQSKHKQN. Polar residues-rich tracts occupy residues 141–151, 250–266, 1360–1373, and 2427–2438; these read ESQSANKNGND, PQRQ…QTRS, FRTT…ATTD, and HSVSSNPSTLTA. 38 FIVAR domains span residues 2524–2580, 2610–2666, 2687–2750, 2780–2836, 2864–2919, 2947–3002, 3030–3085, 3154–3212, 3280–3339, 3407–3465, 3533–3591, 3659–3717, 3785–3843, 3911–3969, 4037–4095, 4163–4221, 4289–4347, 4415–4473, 4541–4599, 4667–4725, 4793–4851, 4919–4977, 5045–5103, 5171–5229, 5297–5355, 5423–5481, 5549–5607, 5675–5733, 5801–5859, 5927–5985, 6053–6111, 6179–6236, 6304–6362, 6430–6488, 6556–6614, 6682–6740, 6818–6866, and 6934–6992; these read AKNH…VSDA, SKNN…ISDE, DTHA…VQSA, AKTK…IAAE, AKTQ…IRQN, AKNQ…INTN, AKTQ…INDK, AMTK…VNQK, AMTG…VNNA, AMGN…VNRA, AMGN…VTEA, AMNT…ITQK, AMAS…VEAA, AMGN…VEQA, AMGT…VTAA, AMKG…ITQA, QMGN…VEAA, AMAN…VENA, AMGT…INQI, AMGQ…VDRA, AMNS…VDNA, AMGA…INGM, AMTA…VNSA, AMKG…ITQV, AMHS…VEQA, AMGQ…VERA, AMTA…VTNA, AMKG…INQA, AMTN…VETA, AMSN…VEQA, AMNQ…INQK, AMGN…VQAA, AMGQ…VEAA, AMQR…VEQA, AMDQ…VTAA, AMNQ…VTQA, DKDQ…VEAA, and AMGN…VEAA.

This chain is Extracellular matrix-binding protein EbhB (ebhB), found in Staphylococcus aureus (strain Newman).